Here is a 61-residue protein sequence, read N- to C-terminus: Putative antitoxin APE_0472b.1 (61 aa).

It belongs to the UPF0165 family.

In terms of biological role, possibly the antitoxin component of a type II toxin-antitoxin (TA) system. In Aeropyrum pernix (strain ATCC 700893 / DSM 11879 / JCM 9820 / NBRC 100138 / K1), this protein is Putative antitoxin APE_0472b.1.